Consider the following 346-residue polypeptide: Very-long-chain 3-oxoacyl-CoA reductase (346 aa).

A helical transmembrane segment spans residues 26–46; that stretch reads GASALLAAGSLFVVSRALVFV. NADP(+) is bound by residues Val71, Asp126, Asp134, Asn153, Tyr220, Lys224, Ile253, and Ser255. The active-site Proton donor is the Tyr220. Catalysis depends on Lys224, which acts as the Lowers pKa of active site Tyr.

Belongs to the short-chain dehydrogenases/reductases (SDR) family.

It localises to the endoplasmic reticulum membrane. The enzyme catalyses a very-long-chain (3R)-3-hydroxyacyl-CoA + NADP(+) = a very-long-chain 3-oxoacyl-CoA + NADPH + H(+). It participates in lipid metabolism; fatty acid biosynthesis. Component of the microsomal membrane bound fatty acid elongation system, which produces the 26-carbon very long-chain fatty acids (VLCFA) from palmitate. Catalyzes the reduction of the 3-ketoacyl-CoA intermediate that is formed in each cycle of fatty acid elongation. VLCFAs serve as precursors for ceramide and sphingolipids. The sequence is that of Very-long-chain 3-oxoacyl-CoA reductase from Aspergillus niger (strain ATCC MYA-4892 / CBS 513.88 / FGSC A1513).